The sequence spans 395 residues: MTNINTVLAELKRGTDEILSEADLIEKLKENRPLKVKLGADPTAPDIHLGHTVVLNKLRQFQQLGHEVYFLIGDFTGMVGDPSGKNATRPPLSREDVLRNAETYKEQIYKILDPQKTKIVFNSEWLSKLGTEGMIRLASNYTVARMLERDDFKKRFGNNQPIAIHEFIYPLLQGYDSVALDADVELGGTDQKFNLLVGRELQKSAGKKPQVAITLPLLVGLDGEKKMSKSLGNYIGVTEAPSDMFGKVMSISDELMWDWYNLLSFRPLSEIAQLKSEVEKGKNPRDVKILLAKELIARFHNEEAANAAEQEFINRFQKGAMPDEMPEFTFSGEIGLATLLKEAGLVPSTSEAIRSAQQGGVKINGEKVDNVKDNAPKGTNVYQVGKRKFARVTVE.

Residues 42–51 (PTAPDIHLGH) carry the 'HIGH' region motif. Residues 226–230 (KMSKS) carry the 'KMSKS' region motif. Residue lysine 229 coordinates ATP. Positions 334-394 (IGLATLLKEA…GKRKFARVTV (61 aa)) constitute an S4 RNA-binding domain.

This sequence belongs to the class-I aminoacyl-tRNA synthetase family. TyrS type 2 subfamily. In terms of assembly, homodimer.

It localises to the cytoplasm. It catalyses the reaction tRNA(Tyr) + L-tyrosine + ATP = L-tyrosyl-tRNA(Tyr) + AMP + diphosphate + H(+). Its function is as follows. Catalyzes the attachment of tyrosine to tRNA(Tyr) in a two-step reaction: tyrosine is first activated by ATP to form Tyr-AMP and then transferred to the acceptor end of tRNA(Tyr). This Haemophilus influenzae (strain 86-028NP) protein is Tyrosine--tRNA ligase.